A 100-amino-acid chain; its full sequence is EKC/KEOPS complex subunit GON7 (100 aa).

Position 1 is an N-acetylmethionine (Met1). Residues 50–100 (SPVQGEAQDRVAAAPEEALDGDDEDDAEDENNIDNRTNSDGPTAKRPKPPS) are disordered. Over residues 66 to 81 (EALDGDDEDDAEDENN) the composition is skewed to acidic residues.

Component of the EKC/KEOPS complex composed of at least GON7, TP53RK, TPRKB, OSGEP and LAGE3; the whole complex dimerizes.

Its subcellular location is the nucleus. Component of the EKC/KEOPS complex that is required for the formation of a threonylcarbamoyl group on adenosine at position 37 (t(6)A37) in tRNAs that read codons beginning with adenine. The complex is probably involved in the transfer of the threonylcarbamoyl moiety of threonylcarbamoyl-AMP (TC-AMP) to the N6 group of A37. GON7 plays a supporting role to the catalytic subunit OSGEP in the complex. The sequence is that of EKC/KEOPS complex subunit GON7 from Sus scrofa (Pig).